Here is a 217-residue protein sequence, read N- to C-terminus: Large ribosomal subunit protein bL25 (217 aa).

The tract at residues 185-217 (TKETVEDEEAEEAAAEGAEETGETGETEEGGDE) is disordered. Positions 189 to 217 (VEDEEAEEAAAEGAEETGETGETEEGGDE) are enriched in acidic residues.

The protein belongs to the bacterial ribosomal protein bL25 family. CTC subfamily. Part of the 50S ribosomal subunit; part of the 5S rRNA/L5/L18/L25 subcomplex. Contacts the 5S rRNA. Binds to the 5S rRNA independently of L5 and L18.

In terms of biological role, this is one of the proteins that binds to the 5S RNA in the ribosome where it forms part of the central protuberance. In Desulfosudis oleivorans (strain DSM 6200 / JCM 39069 / Hxd3) (Desulfococcus oleovorans), this protein is Large ribosomal subunit protein bL25.